The sequence spans 352 residues: Ion-translocating oxidoreductase complex subunit D (352 aa).

5 consecutive transmembrane segments (helical) span residues 20-40 (IMLL…WFFG), 42-62 (GTLV…ALVL), 78-109 (ALLT…VIIA), 123-143 (PAMI…TSWL), and 148-168 (IAVN…GHTA). The residue at position 187 (T187) is an FMN phosphoryl threonine. Transmembrane regions (helical) follow at residues 214-234 (ILAG…GLWL), 242-262 (WHIP…GWLF), 267-287 (LAAP…FFIL), 301-321 (LIFG…GGYP), and 322-342 (DGVA…DYYT).

Belongs to the NqrB/RnfD family. The complex is composed of six subunits: RsxA, RsxB, RsxC, RsxD, RsxE and RsxG. FMN serves as cofactor.

The protein localises to the cell inner membrane. In terms of biological role, part of a membrane-bound complex that couples electron transfer with translocation of ions across the membrane. Required to maintain the reduced state of SoxR. The protein is Ion-translocating oxidoreductase complex subunit D of Escherichia coli (strain SE11).